A 536-amino-acid polypeptide reads, in one-letter code: Probable pectinesterase/pectinesterase inhibitor 59 (536 aa).

The N-terminal stretch at 1 to 30 (MNMMMQKLSILFLHLILLVLLCVHPLTTVA) is a signal peptide. Residues 31 to 183 (DRNSTDWCDK…SHLISNCLAV (153 aa)) are pectinesterase inhibitor 59. 5 N-linked (GlcNAc...) asparagine glycosylation sites follow: N33, N91, N116, N159, and N195. A pectinesterase 59 region spans residues 221–522 (NLVVAKDGSG…FTVGKFIAGT (302 aa)). Substrate is bound by residues T298 and Q328. The Proton donor; for pectinesterase activity role is filled by D351. A disulfide bridge connects residues C365 and C385. D372 acts as the Nucleophile; for pectinesterase activity in catalysis. Residues R440 and W442 each coordinate substrate.

This sequence in the N-terminal section; belongs to the PMEI family. In the C-terminal section; belongs to the pectinesterase family. Expressed in siliques.

The protein localises to the secreted. It is found in the cell wall. The enzyme catalyses [(1-&gt;4)-alpha-D-galacturonosyl methyl ester](n) + n H2O = [(1-&gt;4)-alpha-D-galacturonosyl](n) + n methanol + n H(+). The protein operates within glycan metabolism; pectin degradation; 2-dehydro-3-deoxy-D-gluconate from pectin: step 1/5. Functionally, acts in the modification of cell walls via demethylesterification of cell wall pectin. The sequence is that of Probable pectinesterase/pectinesterase inhibitor 59 (PME59) from Arabidopsis thaliana (Mouse-ear cress).